The following is a 372-amino-acid chain: NADH-quinone oxidoreductase subunit D (372 aa).

This sequence belongs to the complex I 49 kDa subunit family. As to quaternary structure, NDH-1 is composed of 14 different subunits. Subunits NuoB, C, D, E, F, and G constitute the peripheral sector of the complex.

It is found in the cell inner membrane. The catalysed reaction is a quinone + NADH + 5 H(+)(in) = a quinol + NAD(+) + 4 H(+)(out). Its function is as follows. NDH-1 shuttles electrons from NADH, via FMN and iron-sulfur (Fe-S) centers, to quinones in the respiratory chain. The immediate electron acceptor for the enzyme in this species is believed to be ubiquinone. Couples the redox reaction to proton translocation (for every two electrons transferred, four hydrogen ions are translocated across the cytoplasmic membrane), and thus conserves the redox energy in a proton gradient. The sequence is that of NADH-quinone oxidoreductase subunit D from Desulfotalea psychrophila (strain LSv54 / DSM 12343).